Here is a 156-residue protein sequence, read N- to C-terminus: MNINLTMIGQAIAFFIFVVFCMKYVWPPVIQALREREKKIADGLQAAEHAQKDLELAQEKVAKQLREAKQQAAEIIEQANKRANQMLEEAKDQARTEGERLITAAKAEIDQEKNRAKESLRAEVAALALAGAEKILETSVDAGAHSNMLDKLAAEL.

A helical transmembrane segment spans residues 5 to 25 (LTMIGQAIAFFIFVVFCMKYV).

This sequence belongs to the ATPase B chain family. As to quaternary structure, F-type ATPases have 2 components, F(1) - the catalytic core - and F(0) - the membrane proton channel. F(1) has five subunits: alpha(3), beta(3), gamma(1), delta(1), epsilon(1). F(0) has three main subunits: a(1), b(2) and c(10-14). The alpha and beta chains form an alternating ring which encloses part of the gamma chain. F(1) is attached to F(0) by a central stalk formed by the gamma and epsilon chains, while a peripheral stalk is formed by the delta and b chains.

It localises to the cell inner membrane. F(1)F(0) ATP synthase produces ATP from ADP in the presence of a proton or sodium gradient. F-type ATPases consist of two structural domains, F(1) containing the extramembraneous catalytic core and F(0) containing the membrane proton channel, linked together by a central stalk and a peripheral stalk. During catalysis, ATP synthesis in the catalytic domain of F(1) is coupled via a rotary mechanism of the central stalk subunits to proton translocation. Its function is as follows. Component of the F(0) channel, it forms part of the peripheral stalk, linking F(1) to F(0). The sequence is that of ATP synthase subunit b from Hahella chejuensis (strain KCTC 2396).